We begin with the raw amino-acid sequence, 48 residues long: Protein YodE (48 aa).

This is Protein YodE from Escherichia coli (strain K12).